The following is a 294-amino-acid chain: Hydroxyethylthiazole kinase (294 aa).

Substrate is bound at residue Met-57. ATP-binding residues include Arg-132 and Ser-196. Residue Gly-223 participates in substrate binding.

Belongs to the Thz kinase family. Mg(2+) serves as cofactor.

It carries out the reaction 5-(2-hydroxyethyl)-4-methylthiazole + ATP = 4-methyl-5-(2-phosphooxyethyl)-thiazole + ADP + H(+). Its pathway is cofactor biosynthesis; thiamine diphosphate biosynthesis; 4-methyl-5-(2-phosphoethyl)-thiazole from 5-(2-hydroxyethyl)-4-methylthiazole: step 1/1. Catalyzes the phosphorylation of the hydroxyl group of 4-methyl-5-beta-hydroxyethylthiazole (THZ). This Bifidobacterium adolescentis (strain ATCC 15703 / DSM 20083 / NCTC 11814 / E194a) protein is Hydroxyethylthiazole kinase.